A 385-amino-acid chain; its full sequence is Aliphatic amidase expression-regulating protein (385 aa).

Homodimer. Forms a complex with AmiR.

Its function is as follows. Negatively regulates the expression of the aliphatic amidase operon. AmiC functions by inhibiting the action of AmiR at the protein level. It exhibits protein kinase activity. The chain is Aliphatic amidase expression-regulating protein (amiC) from Pseudomonas aeruginosa (strain ATCC 15692 / DSM 22644 / CIP 104116 / JCM 14847 / LMG 12228 / 1C / PRS 101 / PAO1).